Reading from the N-terminus, the 379-residue chain is 2-methylcitrate synthase (379 aa).

His187 is a binding site for substrate. His222 is a catalytic residue. 264–268 contributes to the CoA binding site; it reads KVMGF. His270 is an active-site residue. Arg279 is a binding site for substrate. The active site involves Asp321. Substrate-binding residues include Arg346 and Arg365.

It belongs to the citrate synthase family. As to quaternary structure, homodimer.

It catalyses the reaction propanoyl-CoA + oxaloacetate + H2O = (2S,3S)-2-methylcitrate + CoA + H(+). It carries out the reaction oxaloacetate + acetyl-CoA + H2O = citrate + CoA + H(+). It functions in the pathway organic acid metabolism; propanoate degradation. The protein operates within carbohydrate metabolism; tricarboxylic acid cycle; isocitrate from oxaloacetate: step 1/2. In terms of biological role, involved in the catabolism of short chain fatty acids (SCFA) via the tricarboxylic acid (TCA)(acetyl degradation route) and via the 2-methylcitrate cycle I (propionate degradation route). Catalyzes the Claisen condensation of propionyl-CoA and oxaloacetate (OAA) to yield 2-methylcitrate (2-MC) and CoA. Also catalyzes the condensation of oxaloacetate with acetyl-CoA but with a lower specificity. This is 2-methylcitrate synthase (gltA) from Antarctic bacterium DS2-3R.